We begin with the raw amino-acid sequence, 190 residues long: dCTP deaminase, dUMP-forming (190 aa).

Residues 101–106 (KSSLGR), Asp-119, 127–129 (TLE), Gln-148, Tyr-162, and Gln-174 each bind dCTP. The active-site Proton donor/acceptor is the Glu-129. A disordered region spans residues 161–190 (PYGSSSVGSKYQGQRGPTPSRSYQNFVKND). The segment covering 163-190 (GSSSVGSKYQGQRGPTPSRSYQNFVKND) has biased composition (polar residues).

The protein belongs to the dCTP deaminase family. As to quaternary structure, homotrimer.

It catalyses the reaction dCTP + 2 H2O = dUMP + NH4(+) + diphosphate. It functions in the pathway pyrimidine metabolism; dUMP biosynthesis; dUMP from dCTP: step 1/1. Bifunctional enzyme that catalyzes both the deamination of dCTP to dUTP and the hydrolysis of dUTP to dUMP without releasing the toxic dUTP intermediate. This is dCTP deaminase, dUMP-forming from Mycolicibacterium vanbaalenii (strain DSM 7251 / JCM 13017 / BCRC 16820 / KCTC 9966 / NRRL B-24157 / PYR-1) (Mycobacterium vanbaalenii).